A 206-amino-acid polypeptide reads, in one-letter code: Insecticyanin-B (206 aa).

Positions 1–17 (MQRFLVFTIVAVATAAA) are cleaved as a signal peptide. Intrachain disulfides connect Cys-26–Cys-136 and Cys-60–Cys-192.

This sequence belongs to the calycin superfamily. Lipocalin family. Homotetramer. As to expression, synthesized only in the caterpillars, apparently by the epidermis and secreted into the hemolymph. The protein is passed over from the larval hemolymph to that of pupae and adults and is sequestered in the eggs.

The protein localises to the secreted. This protein binds a chromophore: biliverdin IX, isomer gamma. Mixed with lipoprotein-bound carotenes, this blue protein provides hornworms with their green cryptic coloration which serves a camouflage. The polypeptide is Insecticyanin-B (INSB) (Manduca sexta (Tobacco hawkmoth)).